A 138-amino-acid polypeptide reads, in one-letter code: Transcription antitermination protein NusB (138 aa).

It belongs to the NusB family.

Its function is as follows. Involved in transcription antitermination. Required for transcription of ribosomal RNA (rRNA) genes. Binds specifically to the boxA antiterminator sequence of the ribosomal RNA (rrn) operons. This is Transcription antitermination protein NusB from Limosilactobacillus reuteri (strain DSM 20016) (Lactobacillus reuteri).